The following is a 374-amino-acid chain: UDP-N-acetylglucosamine--N-acetylmuramyl-(pentapeptide) pyrophosphoryl-undecaprenol N-acetylglucosamine transferase (374 aa).

UDP-N-acetyl-alpha-D-glucosamine contacts are provided by residues 13 to 15, Asn124, Arg165, Ser193, and Gln294; that span reads TGG.

This sequence belongs to the glycosyltransferase 28 family. MurG subfamily.

Its subcellular location is the cell inner membrane. The enzyme catalyses di-trans,octa-cis-undecaprenyl diphospho-N-acetyl-alpha-D-muramoyl-L-alanyl-D-glutamyl-meso-2,6-diaminopimeloyl-D-alanyl-D-alanine + UDP-N-acetyl-alpha-D-glucosamine = di-trans,octa-cis-undecaprenyl diphospho-[N-acetyl-alpha-D-glucosaminyl-(1-&gt;4)]-N-acetyl-alpha-D-muramoyl-L-alanyl-D-glutamyl-meso-2,6-diaminopimeloyl-D-alanyl-D-alanine + UDP + H(+). The protein operates within cell wall biogenesis; peptidoglycan biosynthesis. Functionally, cell wall formation. Catalyzes the transfer of a GlcNAc subunit on undecaprenyl-pyrophosphoryl-MurNAc-pentapeptide (lipid intermediate I) to form undecaprenyl-pyrophosphoryl-MurNAc-(pentapeptide)GlcNAc (lipid intermediate II). This chain is UDP-N-acetylglucosamine--N-acetylmuramyl-(pentapeptide) pyrophosphoryl-undecaprenol N-acetylglucosamine transferase, found in Sinorhizobium medicae (strain WSM419) (Ensifer medicae).